A 49-amino-acid polypeptide reads, in one-letter code: Feruloyl esterase A (49 aa).

This sequence belongs to the AB hydrolase superfamily. FaeA family.

The protein resides in the secreted. It carries out the reaction feruloyl-polysaccharide + H2O = ferulate + polysaccharide.. In terms of biological role, involved in degradation of plant cell walls. Hydrolyzes the feruloyl-arabinose ester bond in arabinoxylans as well as the feruloyl-galactose and feruloyl-arabinose ester bonds in pectin. Active against methyl esters of sinapate (MSA), but not caffeate (MCA). The sequence is that of Feruloyl esterase A from Talaromyces stipitatus (strain ATCC 10500 / CBS 375.48 / QM 6759 / NRRL 1006) (Penicillium stipitatum).